The chain runs to 443 residues: Mitochondrial enolase superfamily member 1 (443 aa).

Substrate-binding positions include 24-26 and Tyr-34; that span reads GAD. Ser-148 carries the phosphoserine modification. Lys-220 provides a ligand contact to substrate. Lys-222 functions as the Proton donor/acceptor in the catalytic mechanism. Asp-250 is a Mg(2+) binding site. Residues Asn-252, Glu-276, Glu-305, 355–357, and Glu-386 contribute to the substrate site; that span reads HAG. Mg(2+) is bound by residues Glu-276 and Glu-305. Residue His-355 is part of the active site.

Belongs to the mandelate racemase/muconate lactonizing enzyme family. ENOSF1 subfamily. Mg(2+) serves as cofactor. Could be sumoylated.

The protein localises to the mitochondrion. It catalyses the reaction L-fuconate = 2-dehydro-3-deoxy-L-fuconate + H2O. Its function is as follows. Plays a role in the catabolism of L-fucose, a sugar that is part of the carbohydrates that are attached to cellular glycoproteins. Catalyzes the dehydration of L-fuconate to 2-keto-3-deoxy-L-fuconate by the abstraction of the 2-proton to generate an enediolate intermediate that is stabilized by the magnesium ion. This chain is Mitochondrial enolase superfamily member 1 (ENOSF1), found in Homo sapiens (Human).